Reading from the N-terminus, the 385-residue chain is 3,5,7-trioxododecanoyl-CoA synthase (385 aa).

The active site involves Cys-157.

This sequence belongs to the thiolase-like superfamily. Chalcone/stilbene synthases family. As to expression, expressed in bracts, flowers and young leaves. Not detected in mature leaves, roots and stems. Expressed in glandular trichomes.

The catalysed reaction is hexanoyl-CoA + 3 malonyl-CoA + 3 H(+) = 3,5,7-trioxododecanoyl-CoA + 3 CO2 + 3 CoA. It carries out the reaction 3,5,7-trioxododecanoyl-CoA = olivetol + CO2 + CoA. It functions in the pathway secondary metabolite biosynthesis; terpenoid biosynthesis. In terms of biological role, involved in the biosynthesis of cannabinoids-related terpenophenolic natural products, which have pharmacological activity. Polyketide synthase responsible for olivetol biosynthesis, from a C(12)-polyketide, probably 3,5,7-trioxododecanoyl-CoA. Catalyzes the first step in the cannabinoids biosynthetic pathway. The preferred substrate is hexanoyl-CoA, but also accepts CoA esters with C4 to C8 aliphatic side chains. When using malonyl-CoA and hexanoyl-CoA as substrates, produces undetermined compounds distinct form olivetol or olivetolic acid that could be hexanoyl triacetic acid lactone (HTAL) and pentyl diacetic acid lactone (PDAL). Produces olivetolic acid when acting in concert with olivetolic acid cyclase (OAC). The chain is 3,5,7-trioxododecanoyl-CoA synthase from Cannabis sativa (Hemp).